The sequence spans 586 residues: Scavenger receptor cysteine-rich domain-containing group B protein (586 aa).

The interval 1-33 is disordered; that stretch reads MGPSERPSIGWTPKEAEMQIGPQPDGWSRGWKP. Residues 1–58 form the signal peptide; sequence MGPSERPSIGWTPKEAEMQIGPQPDGWSRGWKPGDRGAVPLPLSPALSFLLLFPLASA. 4 SRCR domains span residues 69–169, 200–300, 355–455, and 484–584; these read LRLV…VLCD, VRLV…VLCA, LRLV…ALCA, and LRLA…VLCQ. Intrachain disulfides connect Cys-94–Cys-158, Cys-107–Cys-168, Cys-138–Cys-148, Cys-225–Cys-289, Cys-238–Cys-299, Cys-269–Cys-279, Cys-380–Cys-444, Cys-393–Cys-454, Cys-424–Cys-434, Cys-509–Cys-573, Cys-522–Cys-583, and Cys-553–Cys-563.

The protein localises to the secreted. In Mus musculus (Mouse), this protein is Scavenger receptor cysteine-rich domain-containing group B protein.